A 396-amino-acid polypeptide reads, in one-letter code: Elongation factor Tu (396 aa).

One can recognise a tr-type G domain in the interval 10-206 (KPHINVGTIG…ALDSYIPEPQ (197 aa)). The interval 19 to 26 (GHVDHGKT) is G1. 19 to 26 (GHVDHGKT) serves as a coordination point for GTP. Thr-26 is a binding site for Mg(2+). Residues 60–64 (GITIN) form a G2 region. Residues 81–84 (DCPG) are G3. GTP-binding positions include 81–85 (DCPGH) and 136–139 (NKAD). The G4 stretch occupies residues 136–139 (NKAD). Residues 174–176 (SAL) are G5.

Belongs to the TRAFAC class translation factor GTPase superfamily. Classic translation factor GTPase family. EF-Tu/EF-1A subfamily. Monomer.

The protein resides in the cytoplasm. The catalysed reaction is GTP + H2O = GDP + phosphate + H(+). Functionally, GTP hydrolase that promotes the GTP-dependent binding of aminoacyl-tRNA to the A-site of ribosomes during protein biosynthesis. This chain is Elongation factor Tu, found in Nitrosospira multiformis (strain ATCC 25196 / NCIMB 11849 / C 71).